The sequence spans 129 residues: Protein yippee-like At5g53940 (129 aa).

The Yippee domain occupies 12–109 (RSYRCRFCRT…LERGRIVDEI (98 aa)). 4 residues coordinate Zn(2+): cysteine 16, cysteine 19, cysteine 72, and cysteine 75.

This sequence belongs to the yippee family.

This is Protein yippee-like At5g53940 from Arabidopsis thaliana (Mouse-ear cress).